The following is a 342-amino-acid chain: Arginase 1, mitochondrial (342 aa).

Residues 1-22 (MSRIIGRKGINYIHRLNSASFT) constitute a mitochondrion transit peptide. L-ornithine is bound by residues serine 77 and 96–99 (GSTN). Mn(2+)-binding residues include histidine 161, aspartate 185, histidine 187, and aspartate 189. 189-191 (DIY) contacts L-ornithine. 195–197 (EGN) provides a ligand contact to substrate. Serine 224 contacts L-ornithine. Mn(2+)-binding residues include aspartate 270 and aspartate 272. Residue glutamate 313 coordinates substrate.

This sequence belongs to the arginase family. As to quaternary structure, forms homohexamers. The cofactor is Mn(2+). In terms of tissue distribution, expressed in vasculature of roots, root tips, cotyledons, leaves, cauline leaves, stems, sepals and pollen.

It localises to the mitochondrion. The enzyme catalyses L-arginine + H2O = urea + L-ornithine. It catalyses the reaction agmatine + H2O = urea + putrescine. It participates in nitrogen metabolism; urea cycle; L-ornithine and urea from L-arginine: step 1/1. The protein operates within amine and polyamine biosynthesis; putrescine biosynthesis via agmatine pathway; putrescine from agmatine: step 1/1. Its function is as follows. Catalyzes the hydrolysis of L-arginine to urea and L-ornithine. The latter can be utilized in the urea cycle or as a precursor for the synthesis of both polyamines and proline. Possesses agmatinase activity. Catalyzes the formation of putrescine from agmatine. This Arabidopsis thaliana (Mouse-ear cress) protein is Arginase 1, mitochondrial.